We begin with the raw amino-acid sequence, 151 residues long: UPF0178 protein CPS_3584 (151 aa).

This sequence belongs to the UPF0178 family.

The protein is UPF0178 protein CPS_3584 of Colwellia psychrerythraea (strain 34H / ATCC BAA-681) (Vibrio psychroerythus).